The primary structure comprises 504 residues: 2,3-bisphosphoglycerate-independent phosphoglycerate mutase (504 aa).

Mn(2+) contacts are provided by Asp13 and Ser63. Catalysis depends on Ser63, which acts as the Phosphoserine intermediate. Residues His124, 153-154 (RD), Arg183, Arg189, 254-257 (RADR), and Lys330 contribute to the substrate site. 5 residues coordinate Mn(2+): Asp397, His401, Asp438, His439, and His457.

This sequence belongs to the BPG-independent phosphoglycerate mutase family. In terms of assembly, monomer. It depends on Mn(2+) as a cofactor.

The enzyme catalyses (2R)-2-phosphoglycerate = (2R)-3-phosphoglycerate. The protein operates within carbohydrate degradation; glycolysis; pyruvate from D-glyceraldehyde 3-phosphate: step 3/5. Its function is as follows. Catalyzes the interconversion of 2-phosphoglycerate and 3-phosphoglycerate. This Rhodopseudomonas palustris (strain ATCC BAA-98 / CGA009) protein is 2,3-bisphosphoglycerate-independent phosphoglycerate mutase.